We begin with the raw amino-acid sequence, 322 residues long: HPr kinase/phosphorylase (322 aa).

Active-site residues include His146 and Lys167. 161–168 (GDSGLGKS) provides a ligand contact to ATP. Ser168 serves as a coordination point for Mg(2+). Residue Asp185 is the Proton acceptor; for phosphorylation activity. Proton donor; for dephosphorylation activity of the active site. The important for the catalytic mechanism of both phosphorylation and dephosphorylation stretch occupies residues 209–218 (LEVRGLGLLD). Glu210 is a Mg(2+) binding site. Arg250 is an active-site residue. Residues 271–276 (QVAAGR) are important for the catalytic mechanism of dephosphorylation.

It belongs to the HPrK/P family. As to quaternary structure, homohexamer. Requires Mg(2+) as cofactor.

It catalyses the reaction [HPr protein]-L-serine + ATP = [HPr protein]-O-phospho-L-serine + ADP + H(+). It carries out the reaction [HPr protein]-O-phospho-L-serine + phosphate + H(+) = [HPr protein]-L-serine + diphosphate. Its function is as follows. Catalyzes the ATP- as well as the pyrophosphate-dependent phosphorylation of a specific serine residue in HPr, a phosphocarrier protein of the phosphoenolpyruvate-dependent sugar phosphotransferase system (PTS). HprK/P also catalyzes the pyrophosphate-producing, inorganic phosphate-dependent dephosphorylation (phosphorolysis) of seryl-phosphorylated HPr (P-Ser-HPr). In Paraburkholderia phytofirmans (strain DSM 17436 / LMG 22146 / PsJN) (Burkholderia phytofirmans), this protein is HPr kinase/phosphorylase.